A 234-amino-acid chain; its full sequence is Phosphatidylinositol phosphate synthase (234 aa).

The next 2 membrane-spanning stretches (helical) occupy residues 28-48 (LTPDAVTIIGTTASVAGALVL) and 54-70 (LFPGACVVWFFVLFDML). A CDP-1,2-diacyl-sn-glycerol is bound at residue 31–34 (DAVT). Residues Asp68 and Asp71 each contribute to the Mg(2+) site. 3 residues coordinate a CDP-1,2-diacyl-sn-glycerol: Gly72, Arg76, and Thr82. Mg(2+) contacts are provided by Asp89 and Asp93. The next 4 helical transmembrane spans lie at 91–110 (ACDRISDGAVFGGLLWWVAF), 116–134 (LLVVATLICLVTSQVISYI), 155–173 (RLIIVLAGAGVSDFPFIAW), and 179–197 (VAMWLLAVTSVITCGQRLY). Residue Asp93 is the Proton acceptor of the active site. The disordered stretch occupies residues 211–234 (PSAPVRDDDAQGHPRSGDPGKTQR). Basic and acidic residues predominate over residues 215-228 (VRDDDAQGHPRSGD).

Belongs to the CDP-alcohol phosphatidyltransferase class-I family. As to quaternary structure, homodimer. Mg(2+) serves as cofactor.

Its subcellular location is the cell membrane. The catalysed reaction is a CDP-1,2-diacyl-sn-glycerol + 1D-myo-inositol 3-phosphate = a 1,2-diacyl-sn-glycero-3-phospho-(1D-myo-inositol-3-phosphate) + CMP + H(+). It carries out the reaction 1,2-di-(9Z-octadecenoyl)-sn-glycero-3-cytidine-5'-diphosphate + 1D-myo-inositol 3-phosphate = 1,2-di-(9Z-octadecenoyl)-sn-glycero-3-phospho-(1D-myo-inositol-3-phosphate) + CMP + H(+). It participates in phospholipid metabolism; phosphatidylinositol phosphate biosynthesis. Catalyzes the conjugation of the 1'-hydroxyl group of D-myo-inositol-3-phosphate (also named L-myo-inositol-1-phosphate) with a lipid tail of cytidine diphosphate diacylglycerol (CDP-DAG), forming phosphatidylinositol phosphate (PIP) and CMP. PIP is a precursor of phosphatidylinositol (PI) which is an essential lipid for mycobacteria required for formation of their cell wall. This is Phosphatidylinositol phosphate synthase from Mycobacterium marinum (strain ATCC BAA-535 / M).